Consider the following 77-residue polypeptide: P fimbrial regulatory protein KS71A (77 aa).

The polypeptide is P fimbrial regulatory protein KS71A (KS71A) (Escherichia coli).